A 179-amino-acid chain; its full sequence is Bifunctional protein PyrR (179 aa).

The PRPP-binding signature appears at 99–111 (VILIDDVLYTGRT).

This sequence belongs to the purine/pyrimidine phosphoribosyltransferase family. PyrR subfamily. In terms of assembly, homodimer and homohexamer; in equilibrium.

The catalysed reaction is UMP + diphosphate = 5-phospho-alpha-D-ribose 1-diphosphate + uracil. Regulates transcriptional attenuation of the pyrimidine nucleotide (pyr) operon by binding in a uridine-dependent manner to specific sites on pyr mRNA. This disrupts an antiterminator hairpin in the RNA and favors formation of a downstream transcription terminator, leading to a reduced expression of downstream genes. Its function is as follows. Also displays a weak uracil phosphoribosyltransferase activity which is not physiologically significant. This chain is Bifunctional protein PyrR, found in Latilactobacillus sakei subsp. sakei (strain 23K) (Lactobacillus sakei subsp. sakei).